Consider the following 362-residue polypeptide: Forkhead box protein F (362 aa).

Residues Leu-19 to Lys-70 form a disordered region. Acidic residues predominate over residues Phe-37–Glu-57. Positions Lys-72–Arg-169 form a DNA-binding region, fork-head.

It localises to the nucleus. Its function is as follows. Transcription factor that is required for cell fate of coelomocytes which are non-muscle mesodermal cells. Acts in concert with, and by activating expression of, the homeodomain gene ceh-34. Binds to the sequence motif 5'-ATAAA[T/C]A-3'. The chain is Forkhead box protein F from Caenorhabditis elegans.